A 1361-amino-acid polypeptide reads, in one-letter code: Restriction of telomere capping protein 1 (1361 aa).

The disordered stretch occupies residues 1 to 104 (MGARRESGLH…DERSEYFGEA (104 aa)). Composition is skewed to polar residues over residues 39–48 (TYGSKSAQSS) and 64–73 (SQRSLLSSNF). WD repeat units follow at residues 180-221 (RKIS…AKDS), 229-269 (EHSR…YKVN), 277-315 (SGSDSVRDVKWMPTYDFASLGADTSLCSSGRSNKFASVH), 337-376 (AHSGPGLCMHWHPHMDYIISGGRDGKCALWYVGDKVNSMV), 405-452 (NTSH…IPQN), and 455-493 (TTAAPSLGFVWWNEDIVFNIDKQSVISAWDIRYEPTLLD). Positions 564–593 (QYKHQDQEAADRESDHDKELEKERETEVDQ) are disordered. A compositionally biased stretch (basic and acidic residues) spans 566–593 (KHQDQEAADRESDHDKELEKERETEVDQ). The stretch at 849–890 (ENVNHLVGLIFLSTHNAETYASVNDLQNFKIWMLIRDSLLND) is one WD 7 repeat. Disordered stretches follow at residues 896–916 (DGSTGRRDASGGAANSDKNGI), 953–982 (NLGRLSEQNLKATNQNTTAKLDDTRKLASS), and 1091–1113 (TSTSLGSGASKRSSMHSTDSYHK). Residues 958–971 (SEQNLKATNQNTTA) show a composition bias toward polar residues. Residues 1091–1101 (TSTSLGSGASK) show a composition bias toward low complexity. WD repeat units lie at residues 1146–1192 (GSIS…QQLY) and 1240–1278 (FEISAHLLKNCPWDDILGAGSGQSTVRLFCENCGKLIVN). An RING-type; degenerate zinc finger spans residues 1314-1356 (CVYCEQPMKKLALSFLNCGHGGHFECLQQWFLDEGMSECPSGC).

It belongs to the WD repeat RTC1 family.

The protein resides in the vacuole. Its function is as follows. May be involved in a process influencing telomere capping. This Eremothecium gossypii (strain ATCC 10895 / CBS 109.51 / FGSC 9923 / NRRL Y-1056) (Yeast) protein is Restriction of telomere capping protein 1 (RTC1).